A 278-amino-acid chain; its full sequence is Juvenile hormone acid O-methyltransferase (278 aa).

The protein belongs to the methyltransferase superfamily. As to expression, specifically expressed in the corpora allata (CA).

It carries out the reaction (2E,6E)-farnesoate + S-adenosyl-L-methionine = methyl (2E,6E)-farnesoate + S-adenosyl-L-homocysteine. The catalysed reaction is juvenile hormone III carboxylate + S-adenosyl-L-methionine = juvenile hormone III + S-adenosyl-L-homocysteine. O-methyltransferase that transfers a methyl group from S-adenosyl-L-methionine (SAM) to the carboxyl group of juvenile hormone acids to produce active juvenile hormones in the corpora allata, the last step during juvenile hormone biosynthesis. Also able to methylate farnesoate to methyl farnesoate. This chain is Juvenile hormone acid O-methyltransferase, found in Bombyx mori (Silk moth).